Here is a 354-residue protein sequence, read N- to C-terminus: UDP-N-acetylglucosamine--N-acetylmuramyl-(pentapeptide) pyrophosphoryl-undecaprenol N-acetylglucosamine transferase (354 aa).

Residues 13–15 (SGG), N125, S189, I242, 261–266 (ALTVSE), and Q286 each bind UDP-N-acetyl-alpha-D-glucosamine.

This sequence belongs to the glycosyltransferase 28 family. MurG subfamily.

It is found in the cell inner membrane. It catalyses the reaction di-trans,octa-cis-undecaprenyl diphospho-N-acetyl-alpha-D-muramoyl-L-alanyl-D-glutamyl-meso-2,6-diaminopimeloyl-D-alanyl-D-alanine + UDP-N-acetyl-alpha-D-glucosamine = di-trans,octa-cis-undecaprenyl diphospho-[N-acetyl-alpha-D-glucosaminyl-(1-&gt;4)]-N-acetyl-alpha-D-muramoyl-L-alanyl-D-glutamyl-meso-2,6-diaminopimeloyl-D-alanyl-D-alanine + UDP + H(+). It participates in cell wall biogenesis; peptidoglycan biosynthesis. Its function is as follows. Cell wall formation. Catalyzes the transfer of a GlcNAc subunit on undecaprenyl-pyrophosphoryl-MurNAc-pentapeptide (lipid intermediate I) to form undecaprenyl-pyrophosphoryl-MurNAc-(pentapeptide)GlcNAc (lipid intermediate II). This chain is UDP-N-acetylglucosamine--N-acetylmuramyl-(pentapeptide) pyrophosphoryl-undecaprenol N-acetylglucosamine transferase, found in Buchnera aphidicola subsp. Acyrthosiphon pisum (strain 5A).